A 64-amino-acid polypeptide reads, in one-letter code: Large ribosomal subunit protein bL35 (64 aa).

Composition is skewed to basic residues over residues 1-15 and 23-33; these read MPKA…KRFR and VRQKANRRHLL. The tract at residues 1-47 is disordered; sequence MPKAKTHSGASKRFRTTGSGKIVRQKANRRHLLEHKPTSRTRRLDGR. Positions 34 to 46 are enriched in basic and acidic residues; the sequence is EHKPTSRTRRLDG.

Belongs to the bacterial ribosomal protein bL35 family.

The protein is Large ribosomal subunit protein bL35 of Mycobacteroides abscessus (strain ATCC 19977 / DSM 44196 / CCUG 20993 / CIP 104536 / JCM 13569 / NCTC 13031 / TMC 1543 / L948) (Mycobacterium abscessus).